We begin with the raw amino-acid sequence, 277 residues long: Large ribosomal subunit protein uL2 (277 aa).

Residues 222–277 are disordered; the sequence is GVAMNPVDHPHGGGEGRTSGGRHPVSPWGKSTKGKRTRSNKATDKFIMHTRHQRKK.

Belongs to the universal ribosomal protein uL2 family. As to quaternary structure, part of the 50S ribosomal subunit. Forms a bridge to the 30S subunit in the 70S ribosome.

In terms of biological role, one of the primary rRNA binding proteins. Required for association of the 30S and 50S subunits to form the 70S ribosome, for tRNA binding and peptide bond formation. It has been suggested to have peptidyltransferase activity; this is somewhat controversial. Makes several contacts with the 16S rRNA in the 70S ribosome. The chain is Large ribosomal subunit protein uL2 from Bartonella quintana (strain Toulouse) (Rochalimaea quintana).